The sequence spans 368 residues: 1-aminocyclopropane-1-carboxylate synthase (368 aa).

Lys-230 is subject to N6-(pyridoxal phosphate)lysine.

This sequence belongs to the class-I pyridoxal-phosphate-dependent aminotransferase family. In terms of assembly, homodimer. Requires pyridoxal 5'-phosphate as cofactor.

It catalyses the reaction S-adenosyl-L-methionine = 1-aminocyclopropane-1-carboxylate + S-methyl-5'-thioadenosine + H(+). It functions in the pathway alkene biosynthesis; ethylene biosynthesis via S-adenosyl-L-methionine; ethylene from S-adenosyl-L-methionine: step 1/2. Its function is as follows. Catalyzes the formation of 1-aminocyclopropane-1-carboxylate, a direct precursor of ethylene in higher plants. The sequence is that of 1-aminocyclopropane-1-carboxylate synthase (ACS5) from Vigna radiata var. radiata (Mung bean).